The following is a 91-amino-acid chain: Small ribosomal subunit protein uS19 (91 aa).

This sequence belongs to the universal ribosomal protein uS19 family.

Its function is as follows. Protein S19 forms a complex with S13 that binds strongly to the 16S ribosomal RNA. This is Small ribosomal subunit protein uS19 from Pseudomonas fluorescens (strain Pf0-1).